The primary structure comprises 308 residues: UPF0026 protein jhp_0109 (308 aa).

The Radical SAM core domain occupies 18–247 (FGKSLGVDLS…VSLPKRSTAQ (230 aa)). [4Fe-4S] cluster-binding residues include Cys-33, Cys-37, and Cys-40.

This sequence belongs to the UPF0026 family. The cofactor is [4Fe-4S] cluster.

In Helicobacter pylori (strain J99 / ATCC 700824) (Campylobacter pylori J99), this protein is UPF0026 protein jhp_0109.